Consider the following 951-residue polypeptide: Metal transporter CNNM1 (951 aa).

Residues 23–43 (AVLLLFFSLSPRPPAAAAWLL) traverse the membrane as a helical segment. The tract at residues 116–135 (GGVAPSAVPTRPPGPQRCRE) is disordered. The CNNM transmembrane domain maps to 218–414 (LLPPAWLRAL…DPYSDLVKEE (197 aa)). 3 helical membrane passes run 222-242 (AWLRALGALLLLALSALFSGL), 282-302 (LLCTLLLGQAGANAALAGWLY), and 321-341 (IHFPWLPALVCTGAVFLGAEI). CBS domains follow at residues 433-495 (LTPL…CTPL) and 502-568 (YNRP…ILDE). Composition is skewed to polar residues over residues 731–740 (SRCSGLNRSE) and 814–824 (KAPTTRGTPQT). Disordered regions lie at residues 731–753 (SRCSGLNRSESPNRERSDFGGSN) and 795–830 (MDSSPQSPDMEAFTDGDSTKAPTTRGTPQTPKDDPA). A phosphothreonine mark is found at threonine 821 and threonine 824. At serine 850 the chain carries Phosphoserine. The tract at residues 920-951 (KLLRTLSGQKRKRSPEGERTSEDNSNLTPLIT) is disordered. Polar residues predominate over residues 942–951 (DNSNLTPLIT).

The protein belongs to the ACDP family. As to expression, restricted to brain and testis.

Its subcellular location is the cell membrane. In terms of biological role, probable metal transporter. The polypeptide is Metal transporter CNNM1 (CNNM1) (Homo sapiens (Human)).